We begin with the raw amino-acid sequence, 115 residues long: Mediator of RNA polymerase II transcription subunit 22 (115 aa).

This sequence belongs to the Mediator complex subunit 22 family. As to quaternary structure, component of the Mediator complex.

It localises to the nucleus. Component of the Mediator complex, a coactivator involved in the regulated transcription of nearly all RNA polymerase II-dependent genes. Mediator functions as a bridge to convey information from gene-specific regulatory proteins to the basal RNA polymerase II transcription machinery. Mediator is recruited to promoters by direct interactions with regulatory proteins and serves as a scaffold for the assembly of a functional preinitiation complex with RNA polymerase II and the general transcription factors. This is Mediator of RNA polymerase II transcription subunit 22 (SRB6) from Candida albicans (strain SC5314 / ATCC MYA-2876) (Yeast).